A 530-amino-acid polypeptide reads, in one-letter code: Glucocorticoid modulatory element-binding protein 2 (530 aa).

The region spanning 81-163 is the SAND domain; that stretch reads EEGENLEAEI…RKIMDSGELD (83 aa). Position 110 (cysteine 110) interacts with Zn(2+). DNA-binding residues include lysine 136, lysine 140, lysine 143, and arginine 154. A Glycyl lysine isopeptide (Lys-Gly) (interchain with G-Cter in SUMO1); alternate cross-link involves residue lysine 155. A Glycyl lysine isopeptide (Lys-Gly) (interchain with G-Cter in SUMO2); alternate cross-link involves residue lysine 155. Zn(2+)-binding residues include histidine 167, cysteine 171, and cysteine 175. 2 coiled-coil regions span residues 245–270 and 304–344; these read LLDE…RVQD and QMDR…SNVL. Phosphoserine is present on serine 373.

As to quaternary structure, homodimer, and heterodimer of GMEB1 and GMEB2. Interacts with the glucocorticoid receptor (NR3C1). May interact with CREB-binding protein (CBP).

The protein localises to the nucleus. Its subcellular location is the cytoplasm. In terms of biological role, trans-acting factor that binds to glucocorticoid modulatory elements (GME) present in the TAT (tyrosine aminotransferase) promoter and increases sensitivity to low concentrations of glucocorticoids. Also binds to the transferrin receptor promoter. This chain is Glucocorticoid modulatory element-binding protein 2 (Gmeb2), found in Mus musculus (Mouse).